A 446-amino-acid polypeptide reads, in one-letter code: Coagulation factor VII (446 aa).

Positions 1-24 (MVPQTHGLLLLYFLLQLQGPLGAV) are cleaved as a signal peptide. Positions 25-41 (VFITQEEAHGVLHRQRR) are excised as a propeptide. The Gla domain occupies 42–86 (ANSLLEELWSSSLERECNEERCSFEEAREIFKSPERTKQFWTIYS). Residues Glu-47, Glu-48, Glu-55, Glu-57, Glu-60, Glu-61, Glu-66, Glu-67, Glu-70, and Glu-76 each carry the 4-carboxyglutamate modification. Cysteines 58 and 63 form a disulfide. The 37-residue stretch at 87–123 (DGDQCASNPCQNGGTCQDHLKSYVCFCPLDFEGRNCE) folds into the EGF-like 1; calcium-binding domain. Intrachain disulfides connect Cys-91–Cys-102, Cys-96–Cys-111, Cys-113–Cys-122, Cys-132–Cys-143, Cys-139–Cys-153, Cys-155–Cys-168, Cys-176–Cys-303, Cys-200–Cys-205, Cys-219–Cys-235, and Cys-351–Cys-370. Ser-93 is a glycosylation site (O-linked (Glc...) serine; alternate). O-linked (Xyl...) serine; alternate glycosylation is present at Ser-93. A glycan (O-linked (Fuc) threonine) is linked at Thr-101. Position 104 is a (3R)-3-hydroxyaspartate (Asp-104). The region spanning 128-169 (EQLICANENGDCDQYCRDHVGTKRTCSCHEDYVLQPDEVSCK) is the EGF-like 2 domain. N-linked (GlcNAc...) asparagine glycosylation is present at Asn-186. The Peptidase S1 domain maps to 194 to 433 (IVGGYVCPKG…YIDWLVKYMD (240 aa)). His-234 functions as the Charge relay system in the catalytic mechanism. Asn-244 carries N-linked (GlcNAc...) asparagine glycosylation. Catalysis depends on Asp-283, which acts as the Charge relay system. Asp-379 is a substrate binding site. An intrachain disulfide couples Cys-381 to Cys-409. Ser-385 (charge relay system) is an active-site residue.

Belongs to the peptidase S1 family. As to quaternary structure, heterodimer of a light chain and a heavy chain linked by a disulfide bond. The vitamin K-dependent, enzymatic carboxylation of some glutamate residues allows the modified protein to bind calcium. In terms of processing, the iron and 2-oxoglutarate dependent 3-hydroxylation of aspartate and asparagine is (R) stereospecific within EGF domains. Post-translationally, can be either O-glucosylated or O-xylosylated at Ser-93 by POGLUT1. In terms of tissue distribution, plasma.

The protein resides in the secreted. It catalyses the reaction Selective cleavage of Arg-|-Ile bond in factor X to form factor Xa.. Functionally, initiates the extrinsic pathway of blood coagulation. Serine protease that circulates in the blood in a zymogen form. Factor VII is converted to factor VIIa by factor Xa, factor XIIa, factor IXa, or thrombin by minor proteolysis. In the presence of tissue factor and calcium ions, factor VIIa then converts factor X to factor Xa by limited proteolysis. Factor VIIa also converts factor IX to factor IXa in the presence of tissue factor and calcium. In Rattus norvegicus (Rat), this protein is Coagulation factor VII (F7).